A 20-amino-acid chain; its full sequence is 21 kDa cold shock-induced protein (20 aa).

The span at threonine 1–valine 12 shows a compositional bias: basic and acidic residues. Residues threonine 1 to tyrosine 20 form a disordered region.

The polypeptide is 21 kDa cold shock-induced protein (Streptococcus thermophilus).